Here is a 70-residue protein sequence, read N- to C-terminus: MNFWHLLLLAVLFFVTVFGADLEGSGSGDVVEDASEQAILKAQNLLNSVPSEESGAEVEASGEDVQTFFF.

The first 19 residues, 1-19 (MNFWHLLLLAVLFFVTVFG), serve as a signal peptide directing secretion. O-linked (Xyl...) (chondroitin sulfate) serine glycosylation is found at Ser25 and Ser27.

The chain is Chondroitin proteoglycan 9 (cpg-9) from Caenorhabditis briggsae.